Consider the following 431-residue polypeptide: Glutamate-1-semialdehyde 2,1-aminomutase (431 aa).

Position 265 is an N6-(pyridoxal phosphate)lysine (K265).

This sequence belongs to the class-III pyridoxal-phosphate-dependent aminotransferase family. HemL subfamily. Homodimer. The cofactor is pyridoxal 5'-phosphate.

It localises to the cytoplasm. It carries out the reaction (S)-4-amino-5-oxopentanoate = 5-aminolevulinate. It functions in the pathway porphyrin-containing compound metabolism; protoporphyrin-IX biosynthesis; 5-aminolevulinate from L-glutamyl-tRNA(Glu): step 2/2. The sequence is that of Glutamate-1-semialdehyde 2,1-aminomutase from Pseudoalteromonas atlantica (strain T6c / ATCC BAA-1087).